The following is a 205-amino-acid chain: SCO2-like protein RP587 (205 aa).

Residues Cys-82, Cys-86, and His-172 each coordinate Cu cation.

The protein belongs to the SCO1/2 family.

In Rickettsia prowazekii (strain Madrid E), this protein is SCO2-like protein RP587.